Here is a 278-residue protein sequence, read N- to C-terminus: tRNA pseudouridine synthase A (278 aa).

The active-site Nucleophile is the D61. Substrate is bound at residue Y119.

Belongs to the tRNA pseudouridine synthase TruA family. As to quaternary structure, homodimer.

The catalysed reaction is uridine(38/39/40) in tRNA = pseudouridine(38/39/40) in tRNA. Functionally, formation of pseudouridine at positions 38, 39 and 40 in the anticodon stem and loop of transfer RNAs. This Oleidesulfovibrio alaskensis (strain ATCC BAA-1058 / DSM 17464 / G20) (Desulfovibrio alaskensis) protein is tRNA pseudouridine synthase A.